Reading from the N-terminus, the 202-residue chain is Glycerol-3-phosphate acyltransferase (202 aa).

A run of 4 helical transmembrane segments spans residues 11 to 31 (ALIA…GLIL), 87 to 107 (PALA…WLGF), 116 to 136 (FIGV…AIWL), and 158 to 178 (VILW…LAAL).

The protein belongs to the PlsY family. In terms of assembly, probably interacts with PlsX.

The protein localises to the cell inner membrane. It catalyses the reaction an acyl phosphate + sn-glycerol 3-phosphate = a 1-acyl-sn-glycero-3-phosphate + phosphate. It participates in lipid metabolism; phospholipid metabolism. In terms of biological role, catalyzes the transfer of an acyl group from acyl-phosphate (acyl-PO(4)) to glycerol-3-phosphate (G3P) to form lysophosphatidic acid (LPA). This enzyme utilizes acyl-phosphate as fatty acyl donor, but not acyl-CoA or acyl-ACP. In Methylorubrum populi (strain ATCC BAA-705 / NCIMB 13946 / BJ001) (Methylobacterium populi), this protein is Glycerol-3-phosphate acyltransferase.